The sequence spans 536 residues: Feruloyl esterase B (536 aa).

Positions 1–20 (MKTSIVLSIVALFLTSKASA) are cleaved as a signal peptide. One can recognise a CBM10 domain in the interval 21-59 (DCWSERLGWPCCSDSNAEVIYVDDDGDWGVENNDWCGIQ). The cellulose-binding stretch occupies residues 22-59 (CWSERLGWPCCSDSNAEVIYVDDDGDWGVENNDWCGIQ). Asparagine 65 is a glycosylation site (N-linked (GlcNAc...) asparagine). Tandem repeats lie at residues 78 to 90 (NQGG…DFGG), 91 to 103 (NQGG…DFGG), 104 to 116 (NQGG…DFGG), 117 to 129 (NQGG…DFGG), 134 to 146 (NQGG…DFGG), 151 to 163 (NQGG…DFGG), 164 to 176 (NQGG…DFGG), 181 to 193 (NQGG…DFGG), 194 to 206 (NQGG…DFGG), 211 to 223 (NQGG…DFGG), 224 to 236 (NQGG…DFGG), and 237 to 249 (NQGG…DFGG). The interval 78–249 (NQGGGMPWGD…GGMQWGDFGG (172 aa)) is 12 X 13 AA repeats of N-Q-G-G-G-M-[PQ]-W-G-D-F-G-G. The span at 203 to 252 (DFGGNQGGNQGGGMPWGDFGGNQGGGMQWGDFGGNQGGGMQWGDFGGNQG) shows a compositional bias: gly residues. The tract at residues 203–273 (DFGGNQGGNQ…SGPTVEYSTD (71 aa)) is disordered. Residues 257-536 (WGNQGGNSGP…WDFVKQFSLP (280 aa)) form a catalytic region.

In terms of assembly, component of the multienzyme cellulase-hemicellulase complex.

The protein localises to the secreted. It carries out the reaction feruloyl-polysaccharide + H2O = ferulate + polysaccharide.. With respect to regulation, inhibited by the specific serine esterase inhibitor AEBSF. Functionally, involved in degradation of plant cell walls. Hydrolyzes of the feruloyl-arabinose ester bond in arabinoxylans as well as the feruloyl-galactose and feruloyl-arabinose ester bonds in pectin. The chain is Feruloyl esterase B (ESTA) from Piromyces equi.